We begin with the raw amino-acid sequence, 637 residues long: DEAD-box ATP-dependent RNA helicase 37 (637 aa).

2 disordered regions span residues 1-68 (MRSS…QPSA) and 86-141 (GPAS…EEAT). 2 stretches are compositionally biased toward low complexity: residues 10 to 28 (ANAE…PVAN) and 46 to 68 (GQAP…QPSA). The segment covering 104 to 116 (GGRGGGGGGGGGW) has biased composition (gly residues). Positions 174-202 (NTFAEIDLGDALNENIRRCKYVKPTPVQR) match the Q motif motif. The Helicase ATP-binding domain maps to 205 to 389 (IPISIAGRDL…SDFLADYIFL (185 aa)). 218 to 225 (AQTGSGKT) is an ATP binding site. Positions 333–336 (DEAD) match the DEAD box motif. One can recognise a Helicase C-terminal domain in the interval 416–567 (YLMDLLHAQK…EVPQWLERYS (152 aa)). Positions 570 to 610 (SSFGGGGGRNRRSGGARFGGRDFRRDNRGGGGGGYGGGGGG) are disordered. The span at 588 to 597 (GGRDFRRDNR) shows a compositional bias: basic and acidic residues. Positions 598–610 (GGGGGGYGGGGGG) are enriched in gly residues.

The protein belongs to the DEAD box helicase family. DDX3/DED1 subfamily.

The enzyme catalyses ATP + H2O = ADP + phosphate + H(+). This chain is DEAD-box ATP-dependent RNA helicase 37 (PL10A), found in Oryza sativa subsp. japonica (Rice).